Reading from the N-terminus, the 116-residue chain is Non-specific lipid-transfer protein AP10 (116 aa).

The N-terminal stretch at 1-26 is a signal peptide; that stretch reads MKGTSMGVAILAMIVMAQLMVHPSVA. 4 disulfides stabilise this stretch: Cys-29–Cys-76, Cys-39–Cys-53, Cys-54–Cys-98, and Cys-74–Cys-112.

Belongs to the plant LTP family. In germinating seeds, detected in the entire surface of the cotyledons, shoot meristem, inter-cotyledon space, primary xylem and immature vascular elements (at protein level). Expressed in seeds, but not the aerial parts of the plant.

The protein localises to the secreted. Its subcellular location is the extracellular space. It is found in the membrane. Plant non-specific lipid-transfer proteins transfer phospholipids as well as galactolipids across membranes. May play a role in wax or cutin deposition in the cell walls of expanding epidermal cells and certain secretory tissues. Permeabilizes the membrane of fungal spores, inhibits germination of the spores of the fungus F.solani at a concentration of 40 ug/ml. Inhibits the growth of F.solani with an IC(50) of 6.5 ug/ml, weakly inhibits the growth of the fungus A.alternata. Binds oleoyl-CoA. This Helianthus annuus (Common sunflower) protein is Non-specific lipid-transfer protein AP10.